A 376-amino-acid polypeptide reads, in one-letter code: 3-dehydroquinate synthase (376 aa).

NAD(+) is bound by residues 115–119 (GVIGD), 139–140 (TS), Lys-152, and Lys-161. Residues Glu-194, His-256, and His-275 each contribute to the Zn(2+) site.

The protein belongs to the sugar phosphate cyclases superfamily. Dehydroquinate synthase family. Requires Co(2+) as cofactor. The cofactor is Zn(2+). It depends on NAD(+) as a cofactor.

It is found in the cytoplasm. It catalyses the reaction 7-phospho-2-dehydro-3-deoxy-D-arabino-heptonate = 3-dehydroquinate + phosphate. Its pathway is metabolic intermediate biosynthesis; chorismate biosynthesis; chorismate from D-erythrose 4-phosphate and phosphoenolpyruvate: step 2/7. Functionally, catalyzes the conversion of 3-deoxy-D-arabino-heptulosonate 7-phosphate (DAHP) to dehydroquinate (DHQ). In Rhizobium leguminosarum bv. trifolii (strain WSM2304), this protein is 3-dehydroquinate synthase.